Consider the following 147-residue polypeptide: Hemoglobin subunit beta (147 aa).

The Globin domain occupies 3 to 147; that stretch reads EWTDFERATI…VVSSLGRQYH (145 aa). Heme b-binding residues include H64 and H93.

The protein belongs to the globin family. As to quaternary structure, hb 1 is a heterotetramer of two alpha-1 and two beta chains. Hb 2 is a heterotetramer of two alpha-2 and two beta chains. In terms of tissue distribution, red blood cells.

In terms of biological role, involved in oxygen transport from gills to the various peripheral tissues. In Cottoperca gobio (Frogmouth), this protein is Hemoglobin subunit beta (hbb).